The primary structure comprises 196 residues: Urease accessory protein UreE (196 aa).

The disordered stretch occupies residues 150 to 196; it reads RGAYSGGHDHGHAHAHSHAEAHSHAHGESHSHSHSHSHDDHHHHDHD. Residues 156–196 are compositionally biased toward basic and acidic residues; that stretch reads GHDHGHAHAHSHAEAHSHAHGESHSHSHSHSHDDHHHHDHD.

Belongs to the UreE family.

The protein resides in the cytoplasm. Involved in urease metallocenter assembly. Binds nickel. Probably functions as a nickel donor during metallocenter assembly. This Mesorhizobium japonicum (strain LMG 29417 / CECT 9101 / MAFF 303099) (Mesorhizobium loti (strain MAFF 303099)) protein is Urease accessory protein UreE.